A 245-amino-acid polypeptide reads, in one-letter code: Octopine transport system permease protein OccM (245 aa).

5 consecutive transmembrane segments (helical) span residues 12-32, 57-77, 96-116, 163-183, and 204-224; these read FVAL…SVAL, FYIF…IYYG, AYWC…AEIM, ILMV…ITGI, and IYLI…WALW. Residues 19–216 form the ABC transmembrane type-1 domain; it reads IPLALQLAVF…ILNFIVARLF (198 aa).

This sequence belongs to the binding-protein-dependent transport system permease family. HisMQ subfamily.

The protein resides in the cell inner membrane. In terms of biological role, component of the octopine active transport system probably consisting of four subunits: Q, M, P and T. In Rhizobium radiobacter (Agrobacterium tumefaciens), this protein is Octopine transport system permease protein OccM (occM).